The sequence spans 223 residues: Rab-like protein 2A (223 aa).

Residues 28–35 (GDSAVGKS), 76–80 (DTAGQ), and 133–136 (NKID) each bind GTP. The disordered stretch occupies residues 200-223 (KLEQKEEDTSGQEQSDTTKSPSPS). Positions 210-223 (GQEQSDTTKSPSPS) are enriched in polar residues.

This sequence belongs to the small GTPase superfamily. Rab family. In terms of assembly, interacts with IFT27, IFT81, IFT172, ATP6V1E1, HK1, LDHC, MAPRE1 and HSPA2. In terms of tissue distribution, isoform 2 is expressed in the testis and localizes to the mid-piece of the sperm tail (at protein level). Isoform 2 is expressed at higher levels in testis than isoform 1. Isoform 1 and isoform 2 are widely expressed and notably within other tissues containing motile cilia including the lung, trachea, brain, ovary and kidney.

Plays an essential role in male fertility, sperm intra-flagellar transport, and tail assembly. Binds, in a GTP-regulated manner, to a specific set of effector proteins including key proteins involved in cilia development and function and delivers them into the growing sperm tail. The protein is Rab-like protein 2A (Rabl2) of Mus musculus (Mouse).